We begin with the raw amino-acid sequence, 336 residues long: MTTDNLNSADTTVQTLRNVLTSETEPLARRFRALFSLKHLACLQPPTEKTLPAIQAIAAGFSSASALLKHELAYCLGQTRNTDALPFLLDVVQDTQEDSMCRHEAAEALGALGYESSLEVLKALRDNENEVDVVRETCDIAVDRILWEQSEARKAEKLKPSDFTSIDPAPPMPLTAKEPSIPDLEKTLLDTNLPLFERYRAMFGLRDLASPPDLPTAKQAVQSLAKGMKDPSALFRHEIAFVFGQLCHPASVPSLTETLSDLNEVGMVRHEAAEALGSLGDVEGVEDTLKKFLNDPEKVVRDSIIVALDMAEFEKNGEIEYALIPDSGNPAAVPAA.

HEAT-like PBS-type repeat units lie at residues Leu-68–Asp-94 and Cys-101–Asn-127. Fe cation-binding residues include His-70, Glu-71, His-103, and Glu-104. The disordered stretch occupies residues Leu-158 to Pro-179. HEAT-like PBS-type repeat units follow at residues Phe-235–Asp-261 and Val-268–Asp-295. Residues His-237, Glu-238, His-270, and Glu-271 each coordinate Fe cation.

Belongs to the deoxyhypusine hydroxylase family. Fe(2+) is required as a cofactor.

It is found in the cytoplasm. Its subcellular location is the nucleus. It carries out the reaction [eIF5A protein]-deoxyhypusine + AH2 + O2 = [eIF5A protein]-hypusine + A + H2O. It functions in the pathway protein modification; eIF5A hypusination. In terms of biological role, catalyzes the hydroxylation of the N(6)-(4-aminobutyl)-L-lysine intermediate to form hypusine, an essential post-translational modification only found in mature eIF-5A factor. In Emericella nidulans (strain FGSC A4 / ATCC 38163 / CBS 112.46 / NRRL 194 / M139) (Aspergillus nidulans), this protein is Deoxyhypusine hydroxylase (lia1).